The following is a 228-amino-acid chain: ATP-dependent dethiobiotin synthetase BioD (228 aa).

13 to 18 (DIGKTF) provides a ligand contact to ATP. Position 17 (Thr17) interacts with Mg(2+). Lys38 is a catalytic residue. Ser42 is a substrate binding site. Residues Asp55, 116–119 (EGSG), 179–180 (NK), and 208–210 (PKI) each bind ATP. 2 residues coordinate Mg(2+): Asp55 and Glu116.

The protein belongs to the dethiobiotin synthetase family. In terms of assembly, homodimer. The cofactor is Mg(2+).

It is found in the cytoplasm. It carries out the reaction (7R,8S)-7,8-diammoniononanoate + CO2 + ATP = (4R,5S)-dethiobiotin + ADP + phosphate + 3 H(+). Its pathway is cofactor biosynthesis; biotin biosynthesis; biotin from 7,8-diaminononanoate: step 1/2. Its function is as follows. Catalyzes a mechanistically unusual reaction, the ATP-dependent insertion of CO2 between the N7 and N8 nitrogen atoms of 7,8-diaminopelargonic acid (DAPA, also called 7,8-diammoniononanoate) to form a ureido ring. This chain is ATP-dependent dethiobiotin synthetase BioD, found in Clostridium perfringens (strain ATCC 13124 / DSM 756 / JCM 1290 / NCIMB 6125 / NCTC 8237 / Type A).